The sequence spans 227 residues: 2-C-methyl-D-erythritol 4-phosphate cytidylyltransferase (227 aa).

The protein belongs to the IspD/TarI cytidylyltransferase family. IspD subfamily.

The enzyme catalyses 2-C-methyl-D-erythritol 4-phosphate + CTP + H(+) = 4-CDP-2-C-methyl-D-erythritol + diphosphate. It participates in isoprenoid biosynthesis; isopentenyl diphosphate biosynthesis via DXP pathway; isopentenyl diphosphate from 1-deoxy-D-xylulose 5-phosphate: step 2/6. Its function is as follows. Catalyzes the formation of 4-diphosphocytidyl-2-C-methyl-D-erythritol from CTP and 2-C-methyl-D-erythritol 4-phosphate (MEP). This chain is 2-C-methyl-D-erythritol 4-phosphate cytidylyltransferase, found in Dehalococcoides mccartyi (strain CBDB1).